The following is a 706-amino-acid chain: Zinc transporter foi (706 aa).

Positions 1–21 (MARHIMAVCVVCLLCAHRLHC) are cleaved as a signal peptide. Residues 22 to 261 (QDHIESLLGP…EKDKDIFYVW (240 aa)) lie on the Extracellular side of the membrane. Residues 40-56 (QDQLNARVYTNLSPSSE) are compositionally biased toward polar residues. A disordered region spans residues 40–101 (QDQLNARVYT…HGPTSESRVP (62 aa)). N-linked (GlcNAc...) asparagine glycosylation is found at N74, N119, N176, N182, N196, and N207. The helical transmembrane segment at 262–282 (IYAFISVFACGILGLVGVAII) threads the bilayer. The Cytoplasmic segment spans residues 283–292 (PFMGSRYYKY). A helical transmembrane segment spans residues 293–313 (IIQYLVALAVGTMTGDALLHL). The Extracellular portion of the chain corresponds to 314-329 (LPHSLAGQDERGMIMK). Residues 330 to 350 (GLGCLGGIIFFYVMEHALTMI) traverse the membrane as a helical segment. Over 351–604 (SEWRKSVEKK…LIKAGMSVKS (254 aa)) the chain is Cytoplasmic. A phosphoserine mark is found at S376, S377, and S381. A helical transmembrane segment spans residues 605 to 625 (AVYYNLLTGVLSFIGMIFGIA). At 626-631 (FGQSQD) the chain is on the extracellular side. The helical transmembrane segment at 632–652 (VAQWMFAVAAGLFIYIALVDM) threads the bilayer. Residues 653 to 665 (MPEISASHKSLGQ) are Cytoplasmic-facing. Residues 666-686 (FLLQILGMLSGVGIMLLIALY) form a helical membrane-spanning segment. Over 687–706 (EGDLMSAFGTAGAASHQHAH) the chain is Extracellular.

The protein belongs to the ZIP transporter (TC 2.A.5) family. Glycosylated. In terms of tissue distribution, maternal foi has almost completely disappeared by embryonic stage 3 except in the pole cells. In stage 6 embryos, expression is enriched in the invaginating mesoderm. In stage 9 embryos, high levels in the anterior and posterior midgut primordia. In stage 14 embryos, broad expression with low levels in the epidermis.

The protein resides in the cell membrane. Its function is as follows. Required for the normal migration of longitudinal and peripheral glial cells. During larval development, required for the migration of the subretinal glia into the eye disk. During embryonic development, also controls the migration of muscle cells toward their attachment sites. Required in the mesoderm for the correct morphogenesis of embryonic gonad and for tracheal branch fusion during tracheal development. Shg may be cooperating with foi to mediate a common mechanism for gonad and tracheal morphogenesis. Acts as a zinc transporter in both yeast and mammalian cells. The polypeptide is Zinc transporter foi (Drosophila melanogaster (Fruit fly)).